Consider the following 366-residue polypeptide: tRNA/tmRNA (uracil-C(5))-methyltransferase (366 aa).

Positions 190, 218, 223, 239, and 299 each coordinate S-adenosyl-L-methionine. Catalysis depends on Cys-324, which acts as the Nucleophile. The Proton acceptor role is filled by Glu-358.

The protein belongs to the class I-like SAM-binding methyltransferase superfamily. RNA M5U methyltransferase family. TrmA subfamily.

The enzyme catalyses uridine(54) in tRNA + S-adenosyl-L-methionine = 5-methyluridine(54) in tRNA + S-adenosyl-L-homocysteine + H(+). It carries out the reaction uridine(341) in tmRNA + S-adenosyl-L-methionine = 5-methyluridine(341) in tmRNA + S-adenosyl-L-homocysteine + H(+). Dual-specificity methyltransferase that catalyzes the formation of 5-methyluridine at position 54 (m5U54) in all tRNAs, and that of position 341 (m5U341) in tmRNA (transfer-mRNA). This chain is tRNA/tmRNA (uracil-C(5))-methyltransferase, found in Salmonella choleraesuis (strain SC-B67).